Consider the following 502-residue polypeptide: UDP-N-acetylmuramate--L-alanine ligase (502 aa).

120-126 (GTHGKTS) contributes to the ATP binding site.

It belongs to the MurCDEF family.

The protein resides in the cytoplasm. It catalyses the reaction UDP-N-acetyl-alpha-D-muramate + L-alanine + ATP = UDP-N-acetyl-alpha-D-muramoyl-L-alanine + ADP + phosphate + H(+). It participates in cell wall biogenesis; peptidoglycan biosynthesis. Functionally, cell wall formation. This Rhodococcus erythropolis (strain PR4 / NBRC 100887) protein is UDP-N-acetylmuramate--L-alanine ligase.